A 366-amino-acid polypeptide reads, in one-letter code: Methylthioribose-1-phosphate isomerase (366 aa).

Aspartate 260 (proton donor) is an active-site residue.

This sequence belongs to the eIF-2B alpha/beta/delta subunits family. MtnA subfamily.

The protein resides in the cytoplasm. It is found in the nucleus. The enzyme catalyses 5-(methylsulfanyl)-alpha-D-ribose 1-phosphate = 5-(methylsulfanyl)-D-ribulose 1-phosphate. It functions in the pathway amino-acid biosynthesis; L-methionine biosynthesis via salvage pathway; L-methionine from S-methyl-5-thio-alpha-D-ribose 1-phosphate: step 1/6. Its function is as follows. Catalyzes the interconversion of methylthioribose-1-phosphate (MTR-1-P) into methylthioribulose-1-phosphate (MTRu-1-P). In Caenorhabditis briggsae, this protein is Methylthioribose-1-phosphate isomerase.